A 301-amino-acid chain; its full sequence is Immune-associated nucleotide-binding protein 5 (301 aa).

The 204-residue stretch at 11–214 (EPVRNIVLVG…FTEENDLNEK (204 aa)) folds into the AIG1-type G domain. Positions 20 to 27 (GPTGNGKS) are G1. 20–28 (GPTGNGKSS) serves as a coordination point for GTP. Residues 46 to 50 (CKTCK) are G2. The interval 63-66 (DTPG) is G3. The tract at residues 133–136 (TGGD) is G4. The segment at 172–174 (NNK) is G5. GTP is bound at residue Asn173.

Belongs to the TRAFAC class TrmE-Era-EngA-EngB-Septin-like GTPase superfamily. AIG1/Toc34/Toc159-like paraseptin GTPase family. IAN subfamily. Expressed in pollen, cotyledons and lateral roots.

This is Immune-associated nucleotide-binding protein 5 from Arabidopsis thaliana (Mouse-ear cress).